The following is a 252-amino-acid chain: uncharacterized protein (252 aa).

Belongs to the GSP E family.

This is an uncharacterized protein from Methanocaldococcus jannaschii (strain ATCC 43067 / DSM 2661 / JAL-1 / JCM 10045 / NBRC 100440) (Methanococcus jannaschii).